The chain runs to 349 residues: Probable G-protein coupled receptor 21 (349 aa).

At 1–32 the chain is on the extracellular side; the sequence is MNSTWDGNQSSHPFCLLALGYLETVRFCLLEV. 2 N-linked (GlcNAc...) asparagine glycosylation sites follow: asparagine 2 and asparagine 8. The chain crosses the membrane as a helical span at residues 33 to 53; the sequence is LIIVFLTVLIISGNIIVIFVF. The Cytoplasmic segment spans residues 54 to 75; it reads HCAPLLNHHSTSYFIQTMAYAD. The chain crosses the membrane as a helical span at residues 76–96; the sequence is LLVGVSCLVPSLSLLYYPLPI. At 97–104 the chain is on the extracellular side; that stretch reads EEAMTCQV. Residues 105–125 traverse the membrane as a helical segment; sequence FGFVVSVLKSISMASLACISI. Residues 126 to 147 are Cytoplasmic-facing; that stretch reads DRYIAITKPLTYNTLVTPWRLR. A helical transmembrane segment spans residues 148-168; that stretch reads LCIFLIWLYSTLVFLPSFFHW. Over 169-191 the chain is Extracellular; the sequence is GKPGYHGDVFQWCAESWHTNSYF. A helical membrane pass occupies residues 192-212; sequence TLFIVMMLYAPAALIVCFTYF. The Cytoplasmic portion of the chain corresponds to 213–252; the sequence is NIFRICQQHTKEISERQARFSSQNGETGEPQTCPDKRYAM. Residues 253 to 273 traverse the membrane as a helical segment; that stretch reads VLFRITSVFYVLWLPYIIYFL. Over 274–283 the chain is Extracellular; sequence LESSTGCSSR. A helical membrane pass occupies residues 284–304; that stretch reads LASFLTTWLAISNSFCNCIIY. The Cytoplasmic segment spans residues 305 to 349; it reads SLSNSVFQRGLKGLSGSLCTSCASHTTAKDPYTVRCKGPPNGSHI.

Belongs to the G-protein coupled receptor 1 family.

The protein localises to the cell membrane. In terms of biological role, orphan receptor. The protein is Probable G-protein coupled receptor 21 (Gpr21) of Mus musculus (Mouse).